The primary structure comprises 302 residues: Sulfate adenylyltransferase subunit 2 (302 aa).

This sequence belongs to the PAPS reductase family. CysD subfamily. Heterodimer composed of CysD, the smaller subunit, and CysN.

It catalyses the reaction sulfate + ATP + H(+) = adenosine 5'-phosphosulfate + diphosphate. The protein operates within sulfur metabolism; hydrogen sulfide biosynthesis; sulfite from sulfate: step 1/3. With CysN forms the ATP sulfurylase (ATPS) that catalyzes the adenylation of sulfate producing adenosine 5'-phosphosulfate (APS) and diphosphate, the first enzymatic step in sulfur assimilation pathway. APS synthesis involves the formation of a high-energy phosphoric-sulfuric acid anhydride bond driven by GTP hydrolysis by CysN coupled to ATP hydrolysis by CysD. The sequence is that of Sulfate adenylyltransferase subunit 2 from Methylococcus capsulatus (strain ATCC 33009 / NCIMB 11132 / Bath).